The primary structure comprises 107 residues: EPIDERMAL PATTERNING FACTOR-like protein 5 (107 aa).

A signal peptide spans 1–22 (MGVVLPTLIVYAFLLFFSSSSA). Cystine bridges form between Cys-64–Cys-98, Cys-68–Cys-74, and Cys-71–Cys-100.

It belongs to the plant cysteine rich small secretory peptide family. Epidermal patterning factor subfamily. In terms of assembly, interacts with ERECTA. Expressed asymetically in the hypocotyl, on the side proximal to the folded cotyledons at germination. Detected in developing flowers, the chalazal region of ovules and near the root apex, but not in inflorescence stems. Expressed in cotyledons, flowers, adult leaves and fruits.

Its subcellular location is the secreted. Controls stomatal patterning. Mediates differentiation of stomatal lineage cells to pavement cells and stomatal development inhibition. TMM (AC Q9SSD1) functions to dampen or block CLL1 signaling. Acts as a growth-regulatory ligand for ERECTA family receptors. Promotes fruit growth and fertility. This Arabidopsis thaliana (Mouse-ear cress) protein is EPIDERMAL PATTERNING FACTOR-like protein 5.